A 70-amino-acid polypeptide reads, in one-letter code: Putative membrane protein insertion efficiency factor (70 aa).

Belongs to the UPF0161 family.

It is found in the cell membrane. Its function is as follows. Could be involved in insertion of integral membrane proteins into the membrane. The chain is Putative membrane protein insertion efficiency factor from Finegoldia magna (strain ATCC 29328 / DSM 20472 / WAL 2508) (Peptostreptococcus magnus).